Here is a 131-residue protein sequence, read N- to C-terminus: MARQPTKKTGPKKQKKNVPNGVAYIQSTFNNTIVTIADLNGEVISWASAGSSGFKGAKKGTPFAAQTAAESAARRANDQGMRQVQVMVSGPGAGRETAIRALQGAGLEITLIRDITPIPHNGCRPPKRRRV.

This sequence belongs to the universal ribosomal protein uS11 family. In terms of assembly, part of the 30S ribosomal subunit. Interacts with proteins S7 and S18. Binds to IF-3.

Located on the platform of the 30S subunit, it bridges several disparate RNA helices of the 16S rRNA. Forms part of the Shine-Dalgarno cleft in the 70S ribosome. The protein is Small ribosomal subunit protein uS11 of Trichodesmium erythraeum (strain IMS101).